Consider the following 198-residue polypeptide: Peroxiredoxin-2F, mitochondrial (198 aa).

Residues 1–27 (MASALLRKATVGGSAAAAAARWASRGL) constitute a mitochondrion transit peptide. One can recognise a Thioredoxin domain in the interval 34–198 (SDIVSAAPGV…SGAEVILDQI (165 aa)). Cys86 functions as the Cysteine sulfenic acid (-SOH) intermediate in the catalytic mechanism.

Belongs to the peroxiredoxin family. Prx5 subfamily. In terms of assembly, monomer.

It is found in the mitochondrion matrix. It catalyses the reaction [glutaredoxin]-dithiol + a hydroperoxide = [glutaredoxin]-disulfide + an alcohol + H2O. Its function is as follows. Thiol-specific peroxidase that catalyzes the reduction of hydrogen peroxide and organic hydroperoxides to water and alcohols, respectively. Plays a role in cell protection against oxidative stress by detoxifying peroxides. Reduces preferentially hydrogen peroxide rather than alkyl peroxides. May be involved in mitochondrial redox homeostasis. This is Peroxiredoxin-2F, mitochondrial (PRXIIF) from Oryza sativa subsp. japonica (Rice).